We begin with the raw amino-acid sequence, 132 residues long: Small ribosomal subunit protein bS6 (132 aa).

This sequence belongs to the bacterial ribosomal protein bS6 family.

Functionally, binds together with bS18 to 16S ribosomal RNA. This Chlorobium chlorochromatii (strain CaD3) protein is Small ribosomal subunit protein bS6.